We begin with the raw amino-acid sequence, 428 residues long: Histone deacetylase 3 (428 aa).

The interval K3–D316 is histone deacetylase. Positions 17, 21, and 25 each coordinate 1D-myo-inositol 1,4,5,6-tetrakisphosphate. H135 is a catalytic residue. Positions 170, 172, and 259 each coordinate Zn(2+). R265 is a binding site for 1D-myo-inositol 1,4,5,6-tetrakisphosphate. Residues L385–I428 form a disordered region. Composition is skewed to basic and acidic residues over residues S386 to S405 and D415 to I428.

Belongs to the histone deacetylase family. HD type 1 subfamily.

The protein resides in the nucleus. Its subcellular location is the chromosome. The protein localises to the cytoplasm. It is found in the cytosol. It carries out the reaction N(6)-acetyl-L-lysyl-[histone] + H2O = L-lysyl-[histone] + acetate. It catalyses the reaction N(6)-acetyl-L-lysyl-[protein] + H2O = L-lysyl-[protein] + acetate. The catalysed reaction is N(6)-(2E)-butenoyl-L-lysyl-[protein] + H2O = (2E)-2-butenoate + L-lysyl-[protein]. The enzyme catalyses N(6)-(2-hydroxyisobutanoyl)-L-lysyl-[protein] + H2O = 2-hydroxy-2-methylpropanoate + L-lysyl-[protein]. It carries out the reaction N(6)-[(S)-lactoyl]-L-lysyl-[protein] + H2O = (S)-lactate + L-lysyl-[protein]. Its activity is regulated as follows. Inositol tetraphosphate (1D-myo-inositol 1,4,5,6-tetrakisphosphate) promotes the histone deacetylase activity by acting as an intermolecular glue between HDAC3 and N-Cor repressor complex components. Its function is as follows. Histone deacetylase that catalyzes the deacetylation of lysine residues on the N-terminal part of the core histones (H2A, H2B, H3 and H4), and some other non-histone substrates. Histone deacetylation gives a tag for epigenetic repression and plays an important role in transcriptional regulation, cell cycle progression and developmental events. Histone deacetylases act via the formation of large multiprotein complexes, such as N-Cor repressor complex, which activate the histone deacetylase activity. Participates in the BCL6 transcriptional repressor activity by deacetylating the H3 'Lys-27' (H3K27) on enhancer elements, antagonizing EP300 acetyltransferase activity and repressing proximal gene expression. Also functions as a deacetylase for non-histone targets. In addition to protein deacetylase activity, also acts as a protein-lysine deacylase by recognizing other acyl groups: catalyzes removal of (2E)-butenoyl (crotonyl), lactoyl (lactyl) and 2-hydroxyisobutanoyl (2-hydroxyisobutyryl) acyl groups from lysine residues, leading to protein decrotonylation, delactylation and de-2-hydroxyisobutyrylation, respectively. The sequence is that of Histone deacetylase 3 (HDAC3) from Gallus gallus (Chicken).